A 230-amino-acid polypeptide reads, in one-letter code: Ribonuclease 3 (230 aa).

The region spanning Met1–Gly134 is the RNase III domain. Glu47 provides a ligand contact to Mg(2+). The active site involves Asp51. Residues Asp120 and Glu123 each coordinate Mg(2+). Residue Glu123 is part of the active site. A DRBM domain is found at Asp160–Glu229.

The protein belongs to the ribonuclease III family. Homodimer. Requires Mg(2+) as cofactor.

It is found in the cytoplasm. The enzyme catalyses Endonucleolytic cleavage to 5'-phosphomonoester.. Its function is as follows. Digests double-stranded RNA. Involved in the processing of primary rRNA transcript to yield the immediate precursors to the large and small rRNAs (23S and 16S). Processes some mRNAs, and tRNAs when they are encoded in the rRNA operon. Processes pre-crRNA and tracrRNA of type II CRISPR loci if present in the organism. In Streptococcus pyogenes serotype M2 (strain MGAS10270), this protein is Ribonuclease 3.